Here is a 413-residue protein sequence, read N- to C-terminus: Elongation factor 1-alpha (413 aa).

One can recognise a tr-type G domain in the interval 5–211; it reads KEHMNLAFIG…DDLEAPEKPV (207 aa). The G1 stretch occupies residues 14-21; sequence GHVDHGKS. 14-21 serves as a coordination point for GTP; that stretch reads GHVDHGKS. Mg(2+) is bound at residue S21. Positions 60–64 are G2; the sequence is GVTID. The G3 stretch occupies residues 81–84; sequence DCPG. GTP-binding positions include 81–85 and 136–139; these read DCPGH and NKMD. Residues 136-139 form a G4 region; that stretch reads NKMD. The segment at 175–177 is G5; it reads SAF.

It belongs to the TRAFAC class translation factor GTPase superfamily. Classic translation factor GTPase family. EF-Tu/EF-1A subfamily.

The protein localises to the cytoplasm. The enzyme catalyses GTP + H2O = GDP + phosphate + H(+). GTP hydrolase that promotes the GTP-dependent binding of aminoacyl-tRNA to the A-site of ribosomes during protein biosynthesis. In Methanothermobacter thermautotrophicus (strain ATCC 29096 / DSM 1053 / JCM 10044 / NBRC 100330 / Delta H) (Methanobacterium thermoautotrophicum), this protein is Elongation factor 1-alpha.